A 37-amino-acid chain; its full sequence is Large ribosomal subunit protein bL36c (37 aa).

The protein belongs to the bacterial ribosomal protein bL36 family.

The protein localises to the plastid. It localises to the chloroplast. The polypeptide is Large ribosomal subunit protein bL36c (Staurastrum punctulatum (Green alga)).